We begin with the raw amino-acid sequence, 509 residues long: MNNTISPGEVLRVIKERIENFDNQVKADSVGEVISIKDGIAIVYGLEKAKFGEVVVFTNGVTGIVLGLDCDTASVVIFGNERSVGEGDTAKCTGKLMDVPVGFELLGRVVDALGNPIDGAGNVDSKIRLPVEIKAPGIIARQSVSEPLQTGIKVIDMLIPIGRGQRELIIGDRKTGKTAIAIDTIINQKLHNDTVSEKEKVYCIYVAIGQKNSAIARIVDKLRVSGALEYTIVVAAGASDTVSFQYLAPYAACAMGEFFRDNGMHCLIVYDDLSKHAVAYRQMSLLLRRPPGREAYPGDVFFLHSRLLERAAKMSDEKGAGSLTALPIIETQAGDVSAYVPTNVISITDGQIFLESEIFYKGFRPAVNVGLSVSRVGSAAQIKSVKKVAGSVKLSLAQYRELEDFAKFGSDIDVHSKKVLDRGRRMMELLKQKQYSPLSVAEQVAVIFAGTSGCLDDISVNNVGKFEEMLLKELNENYPDVLSNISNNFTDDVKDLLLDIISKVTSSFK.

171–178 (GDRKTGKT) lines the ATP pocket.

It belongs to the ATPase alpha/beta chains family. In terms of assembly, F-type ATPases have 2 components, CF(1) - the catalytic core - and CF(0) - the membrane proton channel. CF(1) has five subunits: alpha(3), beta(3), gamma(1), delta(1), epsilon(1). CF(0) has three main subunits: a(1), b(2) and c(9-12). The alpha and beta chains form an alternating ring which encloses part of the gamma chain. CF(1) is attached to CF(0) by a central stalk formed by the gamma and epsilon chains, while a peripheral stalk is formed by the delta and b chains.

It localises to the cell inner membrane. The catalysed reaction is ATP + H2O + 4 H(+)(in) = ADP + phosphate + 5 H(+)(out). In terms of biological role, produces ATP from ADP in the presence of a proton gradient across the membrane. The alpha chain is a regulatory subunit. In Ehrlichia canis (strain Jake), this protein is ATP synthase subunit alpha.